Here is a 566-residue protein sequence, read N- to C-terminus: MTARGAAGRCPSSTWMGSRLLLVCLLVSRSVAEVSEHCSHMIGNGHLQILQQLIDSQMETACLIEYKFVDQEQLDDPVCYLKKAFVLVQVIIEETMRFKDNTPNANATERLQELSMKLNSCFIKDYKEQNEACVQTYKESPLRLLEKIKNFFNETKNFLEKDWNIFSKNCNDSFAKCSSRDVVTKPDCNCLYPKATPSSDLASASPHQPPAPSMAPLADLAWDDSQRTEGSSLLPSDLPLRIEDPGSAKQRPPRSTCQTLESTEQPNHEDPQPHPSAGAPIPGVEDIIESSMGTNWVLEEASGEASEGFLTQERKFSPSNPVGGSIQAETDRPWARSASSPFPKLTEDQQPTNITDTPLTEVNPMRPTGQTLNNTPEKTDGSSTLREDQQEPRSPHFATLNPQRVGNSATPYAKLLPPKSHSWGIVLPLGELEGKKSTRDRRSPAELKGGPASEGAARPVAQSTRDRRSPAELKGGPASEGAARPVARFNSIPLTDTGSSIQDPQTSAFVFWVLGIILVLLAVGGLLFYSWKRRSHRDPRTLDSSVGRPEGSSLAQDEDRQVELPV.

A signal peptide spans 1–32 (MTARGAAGRCPSSTWMGSRLLLVCLLVSRSVA). Over 33–508 (EVSEHCSHMI…SSIQDPQTSA (476 aa)) the chain is Extracellular. N-linked (GlcNAc...) asparagine glycans are attached at residues N106, N153, and N171. Disordered regions lie at residues 197-417 (PSSD…KLLP) and 434-484 (GKKS…GAAR). Over residues 253–265 (PRSTCQTLESTEQ) the composition is skewed to polar residues. O-linked (Xyl...) (chondroitin sulfate) serine glycosylation occurs at S302. The span at 348–360 (DQQPTNITDTPLT) shows a compositional bias: polar residues. N353 is a glycosylation site (N-linked (GlcNAc...) asparagine). O-linked (GalNAc...) threonine glycosylation is found at T355 and T357. The segment covering 377-394 (EKTDGSSTLREDQQEPRS) has biased composition (basic and acidic residues). Residues 400–410 (LNPQRVGNSAT) show a composition bias toward polar residues. The segment covering 434 to 445 (GKKSTRDRRSPA) has biased composition (basic and acidic residues). Residues 509–531 (FVFWVLGIILVLLAVGGLLFYSW) traverse the membrane as a helical segment. At 532–566 (KRRSHRDPRTLDSSVGRPEGSSLAQDEDRQVELPV) the chain is on the cytoplasmic side. The tract at residues 538–566 (DPRTLDSSVGRPEGSSLAQDEDRQVELPV) is disordered. Positions 557–566 (DEDRQVELPV) are enriched in basic and acidic residues.

In terms of assembly, homodimer or heterodimer; disulfide-linked. Likely to exist in multiple forms: homodimer consisting of 2 identical 150-200 kDa proteoglycan subunits, heterodimer consisting of a 150-200 kDa proteoglycan subunit and a truncated 43 kDa subunit, and a homodimer consisting of 2 identical 43 kDa subunits. Interacts with CSF1R. Post-translationally, N-glycosylated. In terms of processing, O-glycosylated; contains chondroitin sulfate.

Its subcellular location is the cell membrane. It is found in the secreted. The protein resides in the extracellular space. Cytokine that plays an essential role in the regulation of survival, proliferation and differentiation of hematopoietic precursor cells, especially mononuclear phagocytes, such as macrophages and monocytes. Promotes the release of pro-inflammatory chemokines, and thereby plays an important role in innate immunity and in inflammatory processes. Plays an important role in the regulation of osteoclast proliferation and differentiation, the regulation of bone resorption, and is required for normal bone development. Required for normal male and female fertility. Promotes reorganization of the actin cytoskeleton, regulates formation of membrane ruffles, cell adhesion and cell migration. Plays a role in lipoprotein clearance. The protein is Macrophage colony-stimulating factor 1 (Csf1) of Rattus norvegicus (Rat).